Reading from the N-terminus, the 397-residue chain is Metal tolerance protein 4 (397 aa).

Over residues 1 to 19 the composition is skewed to basic and acidic residues; it reads MEAKGENDARAPLLAERRR. Residues 1 to 27 form a disordered region; that stretch reads MEAKGENDARAPLLAERRRNSVGSMRG. Topologically, residues 1-104 are cytoplasmic; sequence MEAKGENDAR…EQKQSEFAMK (104 aa). A helical transmembrane segment spans residues 105–122; sequence ISNYANMILLALKIYATI. Residues 123-126 are Vacuolar-facing; the sequence is KSGS. A helical membrane pass occupies residues 127-147; it reads IAIAASTLDSLLDLMAGGILW. Over 148-170 the chain is Cytoplasmic; that stretch reads FTHLSMKSINVYKYPIGKLRVQP. A helical transmembrane segment spans residues 171–191; that stretch reads VGIIIFAAVMATLGFQVFVQA. Residues 192-208 are Vacuolar-facing; the sequence is VEKLIVNETPDKLTPVQ. A helical transmembrane segment spans residues 209 to 229; that stretch reads LTWLYSIMIFATVVKLALWLY. Topologically, residues 230–248 are cytoplasmic; it reads CRTSGNKIVRAYAKDHYFD. A helical membrane pass occupies residues 249-269; that stretch reads VVTNVVGLAAAVLGDMFYWWI. Asp270 is a topological domain (vacuolar). A helical membrane pass occupies residues 271-291; it reads PVGAIALAVYTITNWSGTVWE. Residues 292–397 lie on the Cytoplasmic side of the membrane; sequence NAVSLVGESA…ILSKLPSSQP (106 aa).

This sequence belongs to the cation diffusion facilitator (CDF) transporter (TC 2.A.4) family. SLC30A subfamily.

It is found in the vacuole membrane. In terms of biological role, involved in sequestration of excess metal in the cytoplasm into vacuoles to maintain metal homeostasis. The protein is Metal tolerance protein 4 (MTP4) of Oryza sativa subsp. japonica (Rice).